The chain runs to 254 residues: Triosephosphate isomerase (254 aa).

10 to 12 (NWK) contributes to the substrate binding site. Residue His-99 is the Electrophile of the active site. Residue Glu-169 is the Proton acceptor of the active site. Residues Gly-175, Ser-215, and 236–237 (GG) contribute to the substrate site.

Belongs to the triosephosphate isomerase family. Homodimer.

It is found in the cytoplasm. It catalyses the reaction D-glyceraldehyde 3-phosphate = dihydroxyacetone phosphate. It functions in the pathway carbohydrate biosynthesis; gluconeogenesis. The protein operates within carbohydrate degradation; glycolysis; D-glyceraldehyde 3-phosphate from glycerone phosphate: step 1/1. Its function is as follows. Involved in the gluconeogenesis. Catalyzes stereospecifically the conversion of dihydroxyacetone phosphate (DHAP) to D-glyceraldehyde-3-phosphate (G3P). This is Triosephosphate isomerase from Chlamydia felis (strain Fe/C-56) (Chlamydophila felis).